The following is a 194-amino-acid chain: Holliday junction branch migration complex subunit RuvA (194 aa).

Positions 1–64 are domain I; it reads MISRLTGKLV…EDAHLLFGFA (64 aa). Positions 65 to 143 are domain II; it reads TAEERKTFRQ…AHTVTDGLFA (79 aa). Positions 144–147 are flexible linker; that stretch reads AAPA. The domain III stretch occupies residues 147–194; that stretch reads AADETEDIVSTLLALGYSEREAKAAVKGVPEGTDVGEGVRLALKNLLK.

It belongs to the RuvA family. As to quaternary structure, homotetramer. Forms an RuvA(8)-RuvB(12)-Holliday junction (HJ) complex. HJ DNA is sandwiched between 2 RuvA tetramers; dsDNA enters through RuvA and exits via RuvB. An RuvB hexamer assembles on each DNA strand where it exits the tetramer. Each RuvB hexamer is contacted by two RuvA subunits (via domain III) on 2 adjacent RuvB subunits; this complex drives branch migration. In the full resolvosome a probable DNA-RuvA(4)-RuvB(12)-RuvC(2) complex forms which resolves the HJ.

The protein localises to the cytoplasm. The RuvA-RuvB-RuvC complex processes Holliday junction (HJ) DNA during genetic recombination and DNA repair, while the RuvA-RuvB complex plays an important role in the rescue of blocked DNA replication forks via replication fork reversal (RFR). RuvA specifically binds to HJ cruciform DNA, conferring on it an open structure. The RuvB hexamer acts as an ATP-dependent pump, pulling dsDNA into and through the RuvAB complex. HJ branch migration allows RuvC to scan DNA until it finds its consensus sequence, where it cleaves and resolves the cruciform DNA. This chain is Holliday junction branch migration complex subunit RuvA, found in Neisseria meningitidis serogroup C (strain 053442).